We begin with the raw amino-acid sequence, 37 residues long: Glucagon-1 (37 aa).

The protein belongs to the glucagon family.

Its subcellular location is the secreted. Glucagon plays a key role in glucose metabolism and homeostasis. Regulates blood glucose by increasing gluconeogenesis and decreasing glycolysis. This is Glucagon-1 from Huso dauricus (Kaluga sturgeon).